The chain runs to 222 residues: Riboflavin kinase (222 aa).

A unknown region spans residues 1-92; it reads MVEAEDLQSL…VRIFNPDQRG (92 aa). The tract at residues 93–222 is riboflavin kinase; sequence YTLTGTVISG…DTIEVEITHD (130 aa). 102–107 provides a ligand contact to CDP; sequence GLGEGR. Residues threonine 131 and asparagine 133 each contribute to the Mg(2+) site. Residues threonine 188 and glutamate 196 each coordinate FMN. 201-204 is a CDP binding site; sequence CELR.

This sequence belongs to the archaeal riboflavin kinase family. The cofactor is Mg(2+).

The enzyme catalyses riboflavin + CTP = CDP + FMN + H(+). It participates in cofactor biosynthesis; FMN biosynthesis; FMN from riboflavin (CTP route): step 1/1. In terms of biological role, catalyzes the CTP-dependent phosphorylation of riboflavin (vitamin B2) to form flavin mononucleotide (FMN). This chain is Riboflavin kinase (ribK), found in Methanoculleus marisnigri (strain ATCC 35101 / DSM 1498 / JR1).